Consider the following 123-residue polypeptide: Small ribosomal subunit protein uS12 (123 aa).

Residue Asp89 is modified to 3-methylthioaspartic acid.

This sequence belongs to the universal ribosomal protein uS12 family. Part of the 30S ribosomal subunit. Contacts proteins S8 and S17. May interact with IF1 in the 30S initiation complex.

Functionally, with S4 and S5 plays an important role in translational accuracy. Interacts with and stabilizes bases of the 16S rRNA that are involved in tRNA selection in the A site and with the mRNA backbone. Located at the interface of the 30S and 50S subunits, it traverses the body of the 30S subunit contacting proteins on the other side and probably holding the rRNA structure together. The combined cluster of proteins S8, S12 and S17 appears to hold together the shoulder and platform of the 30S subunit. This chain is Small ribosomal subunit protein uS12, found in Anaeromyxobacter dehalogenans (strain 2CP-1 / ATCC BAA-258).